Reading from the N-terminus, the 658-residue chain is Glycogen debranching enzyme (658 aa).

D336 acts as the Nucleophile in catalysis. E371 acts as the Proton donor in catalysis. Residues 459–484 (EANGEENRDGTNSNYSDNHGKEGLGG) are disordered.

The protein belongs to the glycosyl hydrolase 13 family.

The catalysed reaction is Hydrolysis of (1-&gt;6)-alpha-D-glucosidic linkages to branches with degrees of polymerization of three or four glucose residues in limit dextrin.. It functions in the pathway glycan degradation; glycogen degradation. Functionally, removes maltotriose and maltotetraose chains that are attached by 1,6-alpha-linkage to the limit dextrin main chain, generating a debranched limit dextrin. This Salmonella paratyphi B (strain ATCC BAA-1250 / SPB7) protein is Glycogen debranching enzyme.